Reading from the N-terminus, the 595-residue chain is Alpha-1,3-galactosidase B (595 aa).

Residues 1 to 22 (MKTILLFALSLLLSLSVSDVCA) form the signal peptide. PbH1 repeat units lie at residues 432-454 (TPEV…LFST), 455-477 (PKKT…LLCG), and 488-541 (CRDV…VIED).

This sequence belongs to the glycosyl hydrolase 110 family. B subfamily.

The catalysed reaction is Hydrolysis of terminal, non-reducing branched (1-&gt;3)-alpha-D-galactosidic residues, producing free D-galactose.. It carries out the reaction Hydrolysis of terminal, non-reducing linear (1-&gt;3)-alpha-D-galactosidic residues, producing free D-galactose.. It catalyses the reaction Hydrolysis of terminal, non-reducing alpha-D-galactose residues in alpha-D-galactosides, including galactose oligosaccharides, galactomannans and galactolipids.. Alpha-galactosidase. Removes both branched alpha-1,3-linked galactose residues of blood group B antigens and linear alpha-1,3-linked galactose structures. This chain is Alpha-1,3-galactosidase B (glaB), found in Bacteroides fragilis (strain YCH46).